A 240-amino-acid polypeptide reads, in one-letter code: Ribonuclease PH (240 aa).

Phosphate is bound by residues arginine 87 and 125–127; that span reads GTR.

This sequence belongs to the RNase PH family. In terms of assembly, homohexameric ring arranged as a trimer of dimers.

The catalysed reaction is tRNA(n+1) + phosphate = tRNA(n) + a ribonucleoside 5'-diphosphate. Its function is as follows. Phosphorolytic 3'-5' exoribonuclease that plays an important role in tRNA 3'-end maturation. Removes nucleotide residues following the 3'-CCA terminus of tRNAs; can also add nucleotides to the ends of RNA molecules by using nucleoside diphosphates as substrates, but this may not be physiologically important. Probably plays a role in initiation of 16S rRNA degradation (leading to ribosome degradation) during starvation. This is Ribonuclease PH from Crocosphaera subtropica (strain ATCC 51142 / BH68) (Cyanothece sp. (strain ATCC 51142)).